A 196-amino-acid chain; its full sequence is Xanthine phosphoribosyltransferase (196 aa).

Xanthine contacts are provided by Leu-26 and Asn-33. Residue 134-138 (ASGEA) participates in 5-phospho-alpha-D-ribose 1-diphosphate binding. Residue Lys-162 coordinates xanthine.

Belongs to the purine/pyrimidine phosphoribosyltransferase family. Xpt subfamily. Homodimer.

It localises to the cytoplasm. The catalysed reaction is XMP + diphosphate = xanthine + 5-phospho-alpha-D-ribose 1-diphosphate. It participates in purine metabolism; XMP biosynthesis via salvage pathway; XMP from xanthine: step 1/1. In terms of biological role, converts the preformed base xanthine, a product of nucleic acid breakdown, to xanthosine 5'-monophosphate (XMP), so it can be reused for RNA or DNA synthesis. The sequence is that of Xanthine phosphoribosyltransferase from Moorella thermoacetica (strain ATCC 39073 / JCM 9320).